Consider the following 276-residue polypeptide: Large ribosomal subunit protein uL2 (276 aa).

Residues 208–276 (KAGRNRHRGI…KLIISRRKGK (69 aa)) are disordered. The segment covering 230–240 (DHPHGGGEGKK) has biased composition (basic and acidic residues). Residues 255 to 276 (KGAKTRRKKASDKLIISRRKGK) are compositionally biased toward basic residues.

Belongs to the universal ribosomal protein uL2 family. Part of the 50S ribosomal subunit. Forms a bridge to the 30S subunit in the 70S ribosome.

One of the primary rRNA binding proteins. Required for association of the 30S and 50S subunits to form the 70S ribosome, for tRNA binding and peptide bond formation. It has been suggested to have peptidyltransferase activity; this is somewhat controversial. Makes several contacts with the 16S rRNA in the 70S ribosome. This Campylobacter lari (strain RM2100 / D67 / ATCC BAA-1060) protein is Large ribosomal subunit protein uL2.